An 805-amino-acid chain; its full sequence is MASGSDSKSDDLSTAILKQKSRPNRLIVDESINEDNSVVSLSQAKMDELQLFRGDTVLLKGKKRREAVCIVLSDDTCSDEKIRMNRVVRNNLRVRLGDVISIQPCPDVKYGKRIHVLPIDDTVEGITGNLFEVYLKPYFLEAYRPIRKGDIFLVRGGMRAVEFKVVETDPSPYCIVAPDTVIHCEGEPIKREDEEESLNEVGYDDIGGCRKQLAQIKEMVELPLRHPALFKAIGVKPPRGILLYGPPGTGKTLIARAVANETGAFFFLINGPEIMSKLAGESESNLRKAFEEAEKNAPAIIFIDELDAIAPKREKTHGEVERRIVSQLLTLMDGLKQRAHVIVMAATNRPNSIDPALRRFGRFDREVDIGIPDSTGRLEILQIHTKNMKLSDDVDLEQVANETHGHVGADLAALCSEAALQAIRKKMDLIDLEDETIDAEVMNSLAVTMDDFRWALSQSNPSALRETVVEVPQVTWEDIGGLEDVKRELQELVQYPVEHPDKFLKFGMTPSKGVLFYGPPGCGKTLLAKAIANECQANFISIKGPELLTMWFGESEANVREIFDKARQAAPCVLFFDELDSIAKARGGNIGDGGGAADRVINQILTEMDGMSTKKNVFIIGATNRPDIIDPAILRPGRLDQLIYIPLPDEKSRIAILKANLRKSPVAKDVDLDFLAKMTNGFSGADLTEICQRACKLAIRESIENEIRRERERQTNPSAMEVEEDDPVPEIRRDHFEEAMRFARRSVSDNDIRKYEMFAQTLQQSRGFGSFRFPAGGQGGAGPSQGAGGGSGGSHFNEEEDDLYG.

At Ser3 the chain carries Phosphoserine. ATP contacts are provided by residues 247–253, Asn348, His384, and 521–526; these read PGTGKTL and GCGKTL. The interval 768–805 is disordered; it reads FGSFRFPAGGQGGAGPSQGAGGGSGGSHFNEEEDDLYG. Over residues 776 to 793 the composition is skewed to gly residues; the sequence is GGQGGAGPSQGAGGGSGG.

It belongs to the AAA ATPase family. As to quaternary structure, homohexamer. Forms a ring-shaped particle of 12.5 nm diameter, that displays 6-fold radial symmetry. Interacts with the FACT/DUF complex, which includes subunits ssrp1/duf87 and supt16h/duf140. Post-translationally, phosphorylated.

It localises to the cytoplasm. The protein resides in the cytosol. The protein localises to the endoplasmic reticulum. Its subcellular location is the nucleus. It is found in the stress granule. It carries out the reaction ATP + H2O = ADP + phosphate + H(+). Its activity is regulated as follows. ATPase activity is inhibited or reduced by lowering pH from 9.0 to 7.0, and by addition of Ca(2+), EDTA, KNO(3) or by treatment with N-ethylmaleimide (NEM). Its function is as follows. Necessary for the fragmentation of Golgi stacks during mitosis and for their reassembly after mitosis. Involved in the formation of the nuclear envelope, and of the transitional endoplasmic reticulum (tER). The transfer of membranes from the endoplasmic reticulum to the Golgi apparatus occurs via 50-70 nm transition vesicles which derive from part-rough, part-smooth transitional elements of the endoplasmic reticulum (tER). Vesicle budding from the tER is an ATP-dependent process. Involved in endoplasmic reticulum stress-induced pre-emptive quality control, a mechanism that selectively attenuates the translocation of newly synthesized proteins into the endoplasmic reticulum and reroutes them to the cytosol for proteasomal degradation. Involved in clearance process by mediating G3BP1 extraction from stress granules. Also involved in DNA damage response: recruited to double-strand breaks (DSBs) sites and promotes the recruitment of tp53bp1 at DNA damage sites. Together with sprtn metalloprotease, involved in the repair of covalent DNA-protein cross-links (DPCs) during DNA synthesis. Involved in interstrand cross-link repair in response to replication stress by mediating unloading of the ubiquitinated CMG helicase complex. Enhances cell cycle progression and inhibits apoptosis at low temperatures. Essential for the maturation of ubiquitin-containing autophagosomes and the clearance of ubiquitinated protein by autophagy. Acts as a negative regulator of type I interferon production by promoting ubiquitination of rigi. May play a role in the ubiquitin-dependent sorting of membrane proteins to lysosomes where they undergo degradation. May more particularly play a role in caveolins sorting in cells. By controlling the steady-state expression of the IGF1R receptor, indirectly regulates the insulin-like growth factor receptor signaling pathway. The polypeptide is Transitional endoplasmic reticulum ATPase (Xenopus tropicalis (Western clawed frog)).